We begin with the raw amino-acid sequence, 297 residues long: uncharacterized protein (297 aa).

The next 7 helical transmembrane spans lie at 14 to 34 (LFLM…FLKF), 55 to 75 (LLLG…IYFF), 81 to 101 (FYFG…AGAL), 110 to 130 (AIIL…RVAF), 135 to 155 (LSTL…KLLF), 163 to 183 (IVGA…YGSI), and 208 to 228 (LIMT…SKCF).

It is found in the cell membrane. This is an uncharacterized protein from Methanocaldococcus jannaschii (strain ATCC 43067 / DSM 2661 / JAL-1 / JCM 10045 / NBRC 100440) (Methanococcus jannaschii).